A 431-amino-acid polypeptide reads, in one-letter code: RNA-binding motif, single-stranded-interacting protein 3 (431 aa).

The tract at residues 28 to 53 (YAPAPHPMAPPSPSTNSSSNSSGEQL) is disordered. Over residues 31–40 (APHPMAPPSP) the composition is skewed to pro residues. 2 RRM domains span residues 56–129 (TNLY…MAKQ) and 135–220 (TNLY…FADG). Disordered stretches follow at residues 220-242 (GGQK…PREG) and 393-431 (TSPQ…QSKP). Residues 401-411 (SSQDSSGQQQQ) show a composition bias toward low complexity.

Its subcellular location is the cytoplasm. In terms of biological role, binds poly(A) and poly(U) oligoribonucleotides. In Mus musculus (Mouse), this protein is RNA-binding motif, single-stranded-interacting protein 3 (Rbms3).